The chain runs to 130 residues: Small ribosomal subunit protein uS8 (130 aa).

This sequence belongs to the universal ribosomal protein uS8 family. As to quaternary structure, part of the 30S ribosomal subunit. Contacts proteins S5 and S12.

Its function is as follows. One of the primary rRNA binding proteins, it binds directly to 16S rRNA central domain where it helps coordinate assembly of the platform of the 30S subunit. The sequence is that of Small ribosomal subunit protein uS8 from Salmonella arizonae (strain ATCC BAA-731 / CDC346-86 / RSK2980).